The sequence spans 233 residues: Small ribosomal subunit protein uS3 (233 aa).

A KH type-2 domain is found at 39 to 107 (VRQFLMKTLE…PVQINISEVR (69 aa)).

It belongs to the universal ribosomal protein uS3 family. In terms of assembly, part of the 30S ribosomal subunit. Forms a tight complex with proteins S10 and S14.

Functionally, binds the lower part of the 30S subunit head. Binds mRNA in the 70S ribosome, positioning it for translation. The protein is Small ribosomal subunit protein uS3 of Buchnera aphidicola subsp. Acyrthosiphon pisum (strain 5A).